A 136-amino-acid polypeptide reads, in one-letter code: uncharacterized protein (136 aa).

This is an uncharacterized protein from Methanocaldococcus jannaschii (strain ATCC 43067 / DSM 2661 / JAL-1 / JCM 10045 / NBRC 100440) (Methanococcus jannaschii).